A 591-amino-acid polypeptide reads, in one-letter code: Solute carrier family 40 member 2, chloroplastic (591 aa).

Residues 1–66 constitute a chloroplast transit peptide; sequence MGMVTATAAA…RCYITNVEVD (66 aa). The next 11 membrane-spanning stretches (helical) occupy residues 159-179, 206-226, 242-262, 293-313, 318-338, 391-411, 419-439, 452-472, 482-502, 518-540, and 547-569; these read WPAA…VGFF, GLNA…IYAM, WFIA…ALGV, LVCE…YHPV, IACG…QLIN, VATV…MTAL, PSIV…ATFI, AGAA…VVYW, LLIF…YDVV, LIGG…MAII, and FGFL…CQWL.

Belongs to the ferroportin (FP) (TC 2.A.100) family. SLC40A subfamily.

The protein localises to the membrane. It is found in the plastid. It localises to the chloroplast envelope. In terms of biological role, may be involved in iron transport and iron homeostasis. The sequence is that of Solute carrier family 40 member 2, chloroplastic from Oryza sativa subsp. japonica (Rice).